The sequence spans 147 residues: Hemoglobin subunit beta (147 aa).

The region spanning 2–147 (DWTDAERAAI…VVSALGRQYH (146 aa)) is the Globin domain. The heme b site is built by His-63 and His-92.

The protein belongs to the globin family. In terms of assembly, heterotetramer of two alpha chains and two beta chains. As to expression, red blood cells.

Its function is as follows. Involved in oxygen transport from gills to the various peripheral tissues. This chain is Hemoglobin subunit beta (hbb), found in Leiostomus xanthurus (Spot).